The sequence spans 340 residues: uncharacterized protein (340 aa).

The tract at residues 284–340 is disordered; sequence DHSTPTNYQQETPASQQQLDQENEPIKPSKKSNSSSLPRGTTQPKSNSINRVSKLID. Polar residues-rich tracts occupy residues 286–303 and 320–334; these read STPT…QQLD and LPRG…SINR.

This is an uncharacterized protein from Mycoplasma genitalium (strain ATCC 33530 / DSM 19775 / NCTC 10195 / G37) (Mycoplasmoides genitalium).